The chain runs to 416 residues: Lysosome-associated membrane glycoprotein 3 (416 aa).

The first 27 residues, 1-27, serve as a signal peptide directing secretion; it reads MPRQLSAAAALFASLAVILHDGSQMRA. At 28-381 the chain is on the lumenal side; sequence KAFPETRDYS…NVDECSSDYT (354 aa). N-linked (GlcNAc...) asparagine glycans are attached at residues N112, N158, N164, N200, N232, N266, and N291. 2 disordered regions span residues 136-167 and 179-219; these read PTITPPAHTTGTSSSTVSHTTGNTTQPSNQTT and STTG…LAPQ. Positions 143–160 are enriched in low complexity; it reads HTTGTSSSTVSHTTGNTT. A compositionally biased stretch (low complexity) spans 188 to 208; it reads PTHAPGTTAAAHNTTRTAAPA. Residues C237 and C274 are joined by a disulfide bond. C339 and C376 are oxidised to a cystine. A helical membrane pass occupies residues 382-402; sequence IVLPVIGAIVVGLCLMGMGVY. Residues 403–416 are Cytoplasmic-facing; the sequence is KIRLRCQSSGYQRI.

This sequence belongs to the LAMP family. As to quaternary structure, monomer. Interacts with FURIN. In terms of assembly, (Microbial infection) Interacts with mumps virus protein F; this interaction promotes protein F cleavage by FURIN. Detected in tonsil interdigitating dendritic cells, in spleen, lymph node, Peyer's patches in the small instestine, in thymus medulla and in B-cells (at protein level). Expressed in lymphoid organs and dendritic cells. Expressed in lung. Up-regulated in carcinomas of the esophagus, colon, rectum, ureter, stomach, breast, fallopian tube, thyroid and parotid tissues.

The protein localises to the cell surface. The protein resides in the lysosome membrane. Its subcellular location is the cytoplasmic vesicle membrane. It is found in the early endosome membrane. Functionally, lysosomal membrane glycoprotein which plays a role in the unfolded protein response (UPR) that contributes to protein degradation and cell survival during proteasomal dysfunction. Plays a role in the process of fusion of the lysosome with the autophagosome, thereby modulating the autophagic process. Promotes hepatocellular lipogenesis through activation of the PI3K/Akt pathway. May also play a role in dendritic cell function and in adaptive immunity. (Microbial infection) Plays a positive role in post-entry steps of influenza A virus replication, either virus uncoating, cytosolic transport, or nuclear import of viral components, and promotes nuclear accumulation of influenza nucleoprotein/NP at early stages of viral infection. In terms of biological role, (Microbial infection) Supports the FURIN-mediated cleavage of mumps virus fusion protein F by interacting with both FURIN and the unprocessed form but not the processed form of the viral protein F. Its function is as follows. (Microbial infection) Promotes the intracellular proliferation of Salmonella typhimuium. This Homo sapiens (Human) protein is Lysosome-associated membrane glycoprotein 3 (LAMP3).